A 120-amino-acid polypeptide reads, in one-letter code: uncharacterized protein (120 aa).

Residues 8-28 traverse the membrane as a helical segment; the sequence is LIVKWFVGLMLIMMMVAVSLF.

It localises to the membrane. This is an uncharacterized protein from Bacillus anthracis.